The sequence spans 652 residues: Oligopeptide-binding protein AliB (652 aa).

Positions 1-24 are cleaved as a signal peptide; it reads MKKSKSKYLTLAGLVLGTGVLLSA. A lipid anchor (N-palmitoyl cysteine) is attached at cysteine 25. Cysteine 25 is lipidated: S-diacylglycerol cysteine.

This sequence belongs to the bacterial solute-binding protein 5 family.

The protein localises to the cell membrane. In terms of biological role, part of the binding-protein-dependent transport system for oligopeptides; probably an oligopeptide binding protein. This chain is Oligopeptide-binding protein AliB (aliB), found in Streptococcus pneumoniae serotype 4 (strain ATCC BAA-334 / TIGR4).